A 467-amino-acid polypeptide reads, in one-letter code: Protein indeterminate-domain 6, chloroplastic (467 aa).

The transit peptide at 1–20 (MSSSYNTIALSSTPTFLLSS) directs the protein to the chloroplast. Positions 38-65 (TMVQQQPTSSVAPPPKKRRNQPGNPNPD) are disordered. Positions 39–48 (MVQQQPTSSV) are enriched in polar residues. Position 72 is a phosphoserine (serine 72). 2 C2H2-type zinc fingers span residues 82-104 (FLCE…RRGH) and 123-153 (YLCP…YRKH). The C2H2-type 2; degenerate zinc-finger motif lies at 158–181 (WKCDKCSKRYAVQSDWKAHSKTCG). Residues cysteine 160, cysteine 163, histidine 176, cysteine 180, cysteine 187, cysteine 189, histidine 202, and cysteine 206 each contribute to the Zn(2+) site. The segment at 185–208 (YRCDCGTIFSRRDSYITHRAFCDA) adopts a CCHC-type 2; atypical zinc-finger fold. The SHR-binding stretch occupies residues 195–207 (RRDSYITHRAFCD). The segment at 440–467 (NGRGGRSGGPPLDAEMKFSHPNHPYGKA) is disordered.

It is found in the plastid. The protein localises to the chloroplast. Functionally, probable transcription factor. The polypeptide is Protein indeterminate-domain 6, chloroplastic (Arabidopsis thaliana (Mouse-ear cress)).